We begin with the raw amino-acid sequence, 23 residues long: Conotoxin as25a (23 aa).

Position 4 is a 4-hydroxyproline; partial (Pro4). Residue Pro23 is modified to 4-hydroxyproline; partial; alternate. The residue at position 23 (Pro23) is a Proline amide; alternate.

The name as25b given in PubMed:23474143 corresponds to the hydroxylated peptide. The amidation of the C-terminus of this hydroxylated peptide is not directly confirmed. Post-translationally, contains 3 disulfide bonds. In terms of tissue distribution, expressed by the venom duct.

It is found in the secreted. Functionally, upon intracranial injection in mice, as25a (the toxin without the two 4-hydroxyprolines) provokes paralysis of the hind limbs and death with a dose of 240 pmol. This Conus cancellatus (Cancellate cone) protein is Conotoxin as25a.